We begin with the raw amino-acid sequence, 57 residues long: DNA gyrase inhibitor YacG (57 aa).

Zn(2+) is bound by residues C5, C8, C20, and C24.

Belongs to the DNA gyrase inhibitor YacG family. In terms of assembly, interacts with GyrB. The cofactor is Zn(2+).

Functionally, inhibits all the catalytic activities of DNA gyrase by preventing its interaction with DNA. Acts by binding directly to the C-terminal domain of GyrB, which probably disrupts DNA binding by the gyrase. The polypeptide is DNA gyrase inhibitor YacG (Caulobacter vibrioides (strain ATCC 19089 / CIP 103742 / CB 15) (Caulobacter crescentus)).